We begin with the raw amino-acid sequence, 331 residues long: High-affinity nickel-transport protein NixA (331 aa).

Topologically, residues 1 to 5 (MKLWF) are cytoplasmic. The chain crosses the membrane as a helical span at residues 6-26 (PYFLAIVFLHALGLALLFMAN). Residues 27 to 33 (NASFYAA) are Periplasmic-facing. The chain crosses the membrane as a helical span at residues 34–54 (ASMAYMLGAKHAFDADHIACI). The Cytoplasmic portion of the chain corresponds to 55–66 (DNTIRKLTQQGK). A helical membrane pass occupies residues 67 to 87 (NAYGVGFYFSMGHSSVVILMT). Residues 88 to 113 (IISAFAIAWAKEHTPMLEEIGGVVGT) lie on the Periplasmic side of the membrane. Residues 114-135 (LVSGLFLLIIGLLNAIILLDLL) form a helical membrane-spanning segment. The Cytoplasmic segment spans residues 136–178 (KIFKKSHSNESLSQQQNEEIERLLTSRGLLNRFFKPLFNFVSK). The helical transmembrane segment at 179–199 (SWHIYPIGFLFGLGFDTASEI) threads the bilayer. Residues 200 to 225 (ALLALSSSAIKVSMVGMLSLPILFAA) lie on the Periplasmic side of the membrane. A helical membrane pass occupies residues 226 to 246 (GMSLFDTLDGAFMLKAYDWAF). Over 247-252 (KTPLRK) the chain is Cytoplasmic. A helical transmembrane segment spans residues 253–273 (IYYNISITALSVFIALFIGLI). The Periplasmic portion of the chain corresponds to 274 to 302 (ELFQVVSEKLHLKFENRLLRALQSLEFTD). The chain crosses the membrane as a helical span at residues 303 to 322 (LGYYLVGLFVIAFLGSFFLW). At 323-331 (KIKFSKLES) the chain is on the cytoplasmic side.

The protein belongs to the NiCoT transporter (TC 2.A.52) family.

Its subcellular location is the cell inner membrane. Its function is as follows. High-affinity nickel intake protein. Imports nickel ions in an energy-dependent fashion. Necessary for the expression of catalytically active urease. The polypeptide is High-affinity nickel-transport protein NixA (nixA) (Helicobacter pylori (strain ATCC 700392 / 26695) (Campylobacter pylori)).